The chain runs to 114 residues: uncharacterized protein (114 aa).

The span at 1 to 20 shows a compositional bias: basic and acidic residues; the sequence is MGLSRWHDKNSRPAEEKSEE. Residues 1–22 form a disordered region; sequence MGLSRWHDKNSRPAEEKSEEMQ.

Functionally, may be involved in phosphatase regulation and/or generation of precursor metabolites and energy. This is an uncharacterized protein from Saccharomyces cerevisiae (strain ATCC 204508 / S288c) (Baker's yeast).